A 380-amino-acid chain; its full sequence is Glycogenin-2 (380 aa).

The UDP site is built by Leu10, Tyr16, and Arg95. UDP-alpha-D-glucose-binding residues include Leu10, Tyr16, Arg95, Lys104, Asp120, Ala121, Asp122, Asn158, Thr159, Asp185, Asp188, and Gln189. Residues Asp120, Ala121, and Asp122 each contribute to the UDP site. Asp120 provides a ligand contact to Mn(2+). Mn(2+) is bound at residue Asp122. Tyr230 and Tyr232 each carry an O-linked (Glc...) tyrosine glycan. The UDP site is built by His249, Gly252, and Lys255. His249 serves as a coordination point for Mn(2+). Positions 252 and 255 each coordinate UDP-alpha-D-glucose. The interval 331–355 is disordered; it reads SVDRNASQKSTAEKHDIEKPTSKPQ. Residues 341–351 show a composition bias toward basic and acidic residues; it reads TAEKHDIEKPT. O-linked (Glc...) tyrosine glycosylation is present at Tyr367.

The protein belongs to the glycosyltransferase 8 family. Glycogenin subfamily. In terms of assembly, interacts with glycogen synthase GSY2. The cofactor is Mn(2+).

Its subcellular location is the cytoplasm. It is found in the vacuole. It carries out the reaction L-tyrosyl-[glycogenin] + UDP-alpha-D-glucose = alpha-D-glucosyl-L-tyrosyl-[glycogenin] + UDP + H(+). The enzyme catalyses [1,4-alpha-D-glucosyl](n)-L-tyrosyl-[glycogenin] + UDP-alpha-D-glucose = [1,4-alpha-D-glucosyl](n+1)-L-tyrosyl-[glycogenin] + UDP + H(+). Self-glucosylating initiator of glycogen synthesis. It catalyzes the formation of a short alpha (1,4)-glucosyl chain covalently attached via a glucose 1-O-tyrosyl linkage to internal tyrosine residues and these chains act as primers for the elongation reaction catalyzed by glycogen synthase. Capable of transferring glucosyl residues to unbound acceptors such as free oligoglucans or oligoglucan derivatives. This chain is Glycogenin-2, found in Saccharomyces cerevisiae (strain ATCC 204508 / S288c) (Baker's yeast).